We begin with the raw amino-acid sequence, 132 residues long: Large ribosomal subunit protein eL8 (132 aa).

Position 8 is an N6-acetyllysine; alternate (K8). K8 participates in a covalent cross-link: Glycyl lysine isopeptide (Lys-Gly) (interchain with G-Cter in SUMO2); alternate. K36 participates in a covalent cross-link: Glycyl lysine isopeptide (Lys-Gly) (interchain with G-Cter in SUMO2). Residue K128 is modified to N6-acetyllysine.

This sequence belongs to the eukaryotic ribosomal protein eL8 family. As to quaternary structure, component of the large ribosomal subunit. Interacts with CRY1. Interacts with DICER1, AGO2, TARBP2, MOV10 and EIF6; they form a large RNA-induced silencing complex (RISC).

Its subcellular location is the cytoplasm. Component of the large ribosomal subunit. The ribosome is a large ribonucleoprotein complex responsible for the synthesis of proteins in the cell. This is Large ribosomal subunit protein eL8 (RPL7A) from Sus scrofa (Pig).